A 610-amino-acid polypeptide reads, in one-letter code: E-selectin (610 aa).

The signal sequence occupies residues 1 to 21 (MIASQFLSALTLVLLIKESGA). Residues 22–138 (WSYSASTTNM…CNKKKLALCY (117 aa)) enclose the C-type lectin domain. Residues 22 to 555 (WSYSASTTNM…CEATAKSNIP (534 aa)) are Extracellular-facing. A glycan (N-linked (GlcNAc...) asparagine) is linked at Asn30. 19 disulfides stabilise this stretch: Cys40–Cys137, Cys110–Cys129, Cys142–Cys153, Cys147–Cys162, Cys164–Cys173, Cys179–Cys223, Cys192–Cys205, Cys209–Cys236, Cys241–Cys285, Cys254–Cys267, Cys271–Cys298, Cys303–Cys348, Cys334–Cys361, Cys366–Cys411, Cys397–Cys424, Cys429–Cys474, Cys460–Cys487, Cys492–Cys533, and Cys519–Cys546. Ca(2+) is bound by residues Glu101, Asn103, and Glu108. A carbohydrate is bound by residues 101–108 (EPNNKQNE), 112–117 (EIYIKR), and 125–127 (NDE). Positions 125 and 126 each coordinate Ca(2+). Residues 139 to 174 (TAACTHTSCSGHGECVETINNYTCQCHPGFTGLRCE) form the EGF-like domain. Asn159 is a glycosylation site (N-linked (GlcNAc...) asparagine). Sushi domains follow at residues 177-238 (VTCQ…ACHV), 239-300 (VECD…TCKA), 314-363 (VNCS…VCKA), 365-426 (QCKA…TCEA), 428-489 (RCDA…SCQV), and 490-548 (VQCA…TCEA). 2 N-linked (GlcNAc...) asparagine glycosylation sites follow: Asn198 and Asn202. N-linked (GlcNAc...) asparagine glycosylation is present at Asn264. N-linked (GlcNAc...) asparagine glycosylation is found at Asn315, Asn327, and Asn331. An N-linked (GlcNAc...) asparagine glycan is attached at Asn526. Residues 556-577 (LTVGLSAAGTSLLTLASFLFWL) traverse the membrane as a helical segment. Topologically, residues 578–610 (LKRLRRKAKKFVPASSYQSLQSDGSYQMPSESA) are cytoplasmic.

This sequence belongs to the selectin/LECAM family. As to quaternary structure, interacts with SELPLG/PSGL1 and PODXL2 through the sialyl Lewis X epitope. SELPLG sulfation appears not to be required for this interaction.

It localises to the cell membrane. Cell-surface glycoprotein having a role in immunoadhesion. Mediates in the adhesion of blood neutrophils in cytokine-activated endothelium through interaction with SELPLG/PSGL1. May have a role in capillary morphogenesis. In Equus caballus (Horse), this protein is E-selectin (SELE).